The following is a 207-amino-acid chain: 2,3-bisphosphoglycerate-dependent phosphoglycerate mutase (207 aa).

Residues 10 to 17, 23 to 24, Arg-62, 89 to 92, Lys-100, 116 to 117, and 160 to 161 each bind substrate; these read RHGQSEWN, TG, ERDY, RR, and GN. His-11 serves as the catalytic Tele-phosphohistidine intermediate. Glu-89 serves as the catalytic Proton donor/acceptor.

Belongs to the phosphoglycerate mutase family. BPG-dependent PGAM subfamily. In terms of assembly, homodimer.

The enzyme catalyses (2R)-2-phosphoglycerate = (2R)-3-phosphoglycerate. It participates in carbohydrate degradation; glycolysis; pyruvate from D-glyceraldehyde 3-phosphate: step 3/5. In terms of biological role, catalyzes the interconversion of 2-phosphoglycerate and 3-phosphoglycerate. The sequence is that of 2,3-bisphosphoglycerate-dependent phosphoglycerate mutase from Xanthobacter autotrophicus (strain ATCC BAA-1158 / Py2).